The chain runs to 342 residues: tRNA dimethylallyltransferase (342 aa).

The tract at residues 1–30 is disordered; that stretch reads MSANGPAAEPADGGRAVPAGGGEAVPAGGG. Gly residues predominate over residues 19–30; the sequence is AGGGEAVPAGGG. Position 49–56 (49–56) interacts with ATP; it reads GPTAAGKS. Position 51–56 (51–56) interacts with substrate; that stretch reads TAAGKS. Positions 74 to 77 are interaction with substrate tRNA; sequence DSMQ.

It belongs to the IPP transferase family. In terms of assembly, monomer. It depends on Mg(2+) as a cofactor.

The enzyme catalyses adenosine(37) in tRNA + dimethylallyl diphosphate = N(6)-dimethylallyladenosine(37) in tRNA + diphosphate. Functionally, catalyzes the transfer of a dimethylallyl group onto the adenine at position 37 in tRNAs that read codons beginning with uridine, leading to the formation of N6-(dimethylallyl)adenosine (i(6)A). This chain is tRNA dimethylallyltransferase, found in Salinispora arenicola (strain CNS-205).